Reading from the N-terminus, the 142-residue chain is Small ribosomal subunit protein uS12 (142 aa).

The protein belongs to the universal ribosomal protein uS12 family. As to quaternary structure, part of the 30S ribosomal subunit.

Its function is as follows. With S4 and S5 plays an important role in translational accuracy. Located at the interface of the 30S and 50S subunits. The sequence is that of Small ribosomal subunit protein uS12 from Methanosarcina mazei (strain ATCC BAA-159 / DSM 3647 / Goe1 / Go1 / JCM 11833 / OCM 88) (Methanosarcina frisia).